Here is a 335-residue protein sequence, read N- to C-terminus: Glyceraldehyde-3-phosphate dehydrogenase 1 (335 aa).

Residues 13–14 (TI) and G111 contribute to the NAD(+) site. 140–142 (SCN) serves as a coordination point for D-glyceraldehyde 3-phosphate. Residue C141 is the Nucleophile of the active site. Position 169 (R169) interacts with NAD(+). Residues T171 and 195 to 196 (HG) each bind D-glyceraldehyde 3-phosphate. Q300 is an NAD(+) binding site.

It belongs to the glyceraldehyde-3-phosphate dehydrogenase family. Homotetramer.

The protein resides in the cytoplasm. The catalysed reaction is D-glyceraldehyde 3-phosphate + phosphate + NADP(+) = (2R)-3-phospho-glyceroyl phosphate + NADPH + H(+). The enzyme catalyses D-glyceraldehyde 3-phosphate + phosphate + NAD(+) = (2R)-3-phospho-glyceroyl phosphate + NADH + H(+). It participates in carbohydrate degradation; glycolysis; pyruvate from D-glyceraldehyde 3-phosphate: step 1/5. The polypeptide is Glyceraldehyde-3-phosphate dehydrogenase 1 (gapA) (Methanosarcina acetivorans (strain ATCC 35395 / DSM 2834 / JCM 12185 / C2A)).